A 328-amino-acid polypeptide reads, in one-letter code: Cytochrome c biogenesis protein CcsA (328 aa).

8 helical membrane-spanning segments follow: residues 13 to 33 (ISFS…LVNL), 46 to 66 (GIVI…IYSG), 73 to 93 (LYES…VSYF), 101 to 121 (LNAI…SGLL), 146 to 166 (MILG…LLVI), 234 to 254 (IISL…VWAN), 263 to 283 (WDPK…YLHI), and 295 to 315 (AIVA…VNLL).

Belongs to the CcmF/CycK/Ccl1/NrfE/CcsA family. May interact with Ccs1.

It is found in the plastid. Its subcellular location is the chloroplast thylakoid membrane. In terms of biological role, required during biogenesis of c-type cytochromes (cytochrome c6 and cytochrome f) at the step of heme attachment. The chain is Cytochrome c biogenesis protein CcsA from Barbarea verna (Land cress).